A 119-amino-acid chain; its full sequence is MLQIPQNYIHTRSTPFWNKQTAPAGIFERHLDKGTRPGVYPRLSVMHGAVKYLGYADEHSAEPDQVILIEAGQFAVFPPEKWHNIEAMTDDTYFNIDFFVAPEVLMEGAQQRKVIHNGK.

This is an uncharacterized protein from Escherichia coli O157:H7.